The primary structure comprises 544 residues: Pyruvate kinase (544 aa).

Position 31 (Arg-31) interacts with substrate. 2 residues coordinate K(+): Asn-33 and Asp-61. ATP is bound at residue 33–36 (NSAH). Arg-68 serves as a coordination point for ATP. Glu-204 is a binding site for Mg(2+). Substrate contacts are provided by Gly-227, Asp-228, and Thr-260. Asp-228 provides a ligand contact to Mg(2+).

Belongs to the pyruvate kinase family. As to quaternary structure, homotetramer. It depends on Mg(2+) as a cofactor. The cofactor is K(+).

The catalysed reaction is pyruvate + ATP = phosphoenolpyruvate + ADP + H(+). It functions in the pathway carbohydrate degradation; glycolysis; pyruvate from D-glyceraldehyde 3-phosphate: step 5/5. In Thermoplasma acidophilum (strain ATCC 25905 / DSM 1728 / JCM 9062 / NBRC 15155 / AMRC-C165), this protein is Pyruvate kinase.